The following is a 217-amino-acid chain: Phosphatidylserine decarboxylase proenzyme (217 aa).

The Schiff-base intermediate with substrate; via pyruvic acid role is filled by serine 187. Serine 187 is subject to Pyruvic acid (Ser); by autocatalysis.

It belongs to the phosphatidylserine decarboxylase family. PSD-A subfamily. As to quaternary structure, heterodimer of a large membrane-associated beta subunit and a small pyruvoyl-containing alpha subunit. It depends on pyruvate as a cofactor. Is synthesized initially as an inactive proenzyme. Formation of the active enzyme involves a self-maturation process in which the active site pyruvoyl group is generated from an internal serine residue via an autocatalytic post-translational modification. Two non-identical subunits are generated from the proenzyme in this reaction, and the pyruvate is formed at the N-terminus of the alpha chain, which is derived from the carboxyl end of the proenzyme. The post-translation cleavage follows an unusual pathway, termed non-hydrolytic serinolysis, in which the side chain hydroxyl group of the serine supplies its oxygen atom to form the C-terminus of the beta chain, while the remainder of the serine residue undergoes an oxidative deamination to produce ammonia and the pyruvoyl prosthetic group on the alpha chain.

It is found in the cell membrane. It carries out the reaction a 1,2-diacyl-sn-glycero-3-phospho-L-serine + H(+) = a 1,2-diacyl-sn-glycero-3-phosphoethanolamine + CO2. The protein operates within phospholipid metabolism; phosphatidylethanolamine biosynthesis; phosphatidylethanolamine from CDP-diacylglycerol: step 2/2. Its function is as follows. Catalyzes the formation of phosphatidylethanolamine (PtdEtn) from phosphatidylserine (PtdSer). In Thermobifida fusca (strain YX), this protein is Phosphatidylserine decarboxylase proenzyme.